We begin with the raw amino-acid sequence, 514 residues long: Na(+)/H(+) antiporter NhaB (514 aa).

Helical transmembrane passes span 21–41 (LAIVVFLIINPIVFFFISPFI), 43–63 (GWLLVAEFIFTLAMALKCYPL), 88–108 (IMANFEVILLLIFMVAGIFFM), 143–163 (FLDALTVVAVIISVAMGFYGV), 203–223 (LMMHAGVGTALGGVMTVVGEP), 239–259 (FFLRMAPVTIPVFICGLLTCF), 304–324 (ALIAIWLIVGLAFHLAAVGLI), 349–369 (QESLPFTALLVVFFSVVAVII), 390–410 (LALFYLFNGLLSSISDNVFVA), 448–468 (ATPNGQAAFLFLLTSSISPLI), and 484–504 (IVLSIIGLLAIEFILPAATIW).

It belongs to the NhaB Na(+)/H(+) (TC 2.A.34) antiporter family.

Its subcellular location is the cell inner membrane. It carries out the reaction 2 Na(+)(in) + 3 H(+)(out) = 2 Na(+)(out) + 3 H(+)(in). Functionally, na(+)/H(+) antiporter that extrudes sodium in exchange for external protons. The chain is Na(+)/H(+) antiporter NhaB from Haemophilus influenzae (strain ATCC 51907 / DSM 11121 / KW20 / Rd).